Here is a 524-residue protein sequence, read N- to C-terminus: Xanthotoxin 5-hydroxylase CYP82C4 (524 aa).

A helical membrane pass occupies residues 1-21 (MDTSLFSLFVPILVFVFIALF). Residue Cys463 coordinates heme.

The protein belongs to the cytochrome P450 family. The cofactor is heme. In terms of tissue distribution, expressed in both primary and lateral roots under iron-deficient conditions, except in apical root zones, and mostly in the root epidermal layer.

The protein localises to the membrane. The catalysed reaction is fraxetin + reduced [NADPH--hemoprotein reductase] + O2 = sideretin (reduced form) + oxidized [NADPH--hemoprotein reductase] + H2O + H(+). The enzyme catalyses xanthotoxin + reduced [NADPH--hemoprotein reductase] + O2 = 5-hydroxyxanthotoxin + oxidized [NADPH--hemoprotein reductase] + H2O + 2 H(+). It participates in phenylpropanoid metabolism. Can hydroxylate xanthotoxin (8-methoxypsoralen) to form 5-hydroxyxanthotoxin (5-hydroxy-8-methoxypsoralen) in vivo and in vitro. Involved in the early iron deficiency response, possibly through an IDE1-like mediated pathway. Involved in the pathway of sideretin biosynthesis from feruloyl CoA, a redox-active catecholic metabolite exuded by roots in response to iron deficiency in order to facilitate the uptake of iron; this pathway consists in the successive conversion from feruloyl CoA to scopoletin, from scopoletin to fraxetin and from fraxetin to sideretin. Catalyzes the biosynthesis of sideretin via fraxetin hydroxylation. In Arabidopsis thaliana (Mouse-ear cress), this protein is Xanthotoxin 5-hydroxylase CYP82C4.